Here is a 95-residue protein sequence, read N- to C-terminus: Large ribosomal subunit protein bL21 (95 aa).

It belongs to the bacterial ribosomal protein bL21 family. Part of the 50S ribosomal subunit. Contacts protein L20.

Functionally, this protein binds to 23S rRNA in the presence of protein L20. The sequence is that of Large ribosomal subunit protein bL21 from Prosthecochloris vibrioformis (Chlorobium vibrioforme).